We begin with the raw amino-acid sequence, 487 residues long: Melanopsin (487 aa).

The segment at 1–37 (MNPPSGPRTQEPSCVATPASPSRWDGYRSSTSSLDQP) is disordered. The Extracellular segment spans residues 1–67 (MNPPSGPRTQ…VDVPDHAHYT (67 aa)). A helical transmembrane segment spans residues 68-88 (LGTVILLVGLTGILGNLMVIY). Over 89-102 (TFCRSRGLRTPANM) the chain is Cytoplasmic. A helical transmembrane segment spans residues 103 to 123 (FIINLAVSDFFMSFTQAPVFF). Residues 124 to 139 (ASSLHKRWLFGEAGCE) lie on the Extracellular side of the membrane. A disulfide bond links Cys-138 and Cys-216. A helical transmembrane segment spans residues 140–160 (FYAFCGALFGITSMITLMAIA). Residues 161–183 (LDRYLVITHPLATIGVVSKRRAA) are Cytoplasmic-facing. A helical membrane pass occupies residues 184–204 (LVLLGVWLYALAWSLPPFFGW). Residues 205 to 233 (SAYVPEGLLTSCSWDYMSFTPSVRAYTML) are Extracellular-facing. Residues 234 to 254 (LFCFVFFLPLLVIVYCYIFIF) traverse the membrane as a helical segment. Topologically, residues 255 to 291 (RAIRETGQALQTFRACEGGGRSPRQRQRLQREWKMAK) are cytoplasmic. The chain crosses the membrane as a helical span at residues 292–312 (IELLVILLFVLSWAPYSIVAL). At 313-327 (MAFAGYAHVLTPYMN) the chain is on the extracellular side. The chain crosses the membrane as a helical span at residues 328 to 348 (SVPAVIAKASAIHNPIIYAIT). Lys-335 carries the N6-(retinylidene)lysine modification. Residues 349 to 487 (HPKYRMAIAQ…LPLHPGWAFH (139 aa)) are Cytoplasmic-facing. The disordered stretch occupies residues 436-459 (CSQGLEDREAKAPVRPQGREAETP). Positions 440 to 457 (LEDREAKAPVRPQGREAE) are enriched in basic and acidic residues.

This sequence belongs to the G-protein coupled receptor 1 family. Opsin subfamily. As to expression, eye. Expression is restricted within the ganglion cell layer.

The protein resides in the cell membrane. The protein localises to the cell projection. It is found in the axon. Its subcellular location is the dendrite. It localises to the perikaryon. Functionally, photoreceptor that binds cis-retinaldehydes. Contributes to pupillar reflex, photoentrainment and other non-image forming responses to light. May be involved in the optokinetic visual tracking response. May be involved in the regulation of retinal hyaloid vessel growth and regression. This chain is Melanopsin (OPN4), found in Felis catus (Cat).